A 266-amino-acid polypeptide reads, in one-letter code: Glutamate racemase (266 aa).

Residues 9-10 (DS) and 41-42 (YG) contribute to the substrate site. Cysteine 72 acts as the Proton donor/acceptor in catalysis. Position 73–74 (73–74 (NT)) interacts with substrate. Cysteine 184 (proton donor/acceptor) is an active-site residue. 185–186 (TH) provides a ligand contact to substrate.

This sequence belongs to the aspartate/glutamate racemases family.

It catalyses the reaction L-glutamate = D-glutamate. It functions in the pathway cell wall biogenesis; peptidoglycan biosynthesis. Functionally, provides the (R)-glutamate required for cell wall biosynthesis. The protein is Glutamate racemase of Staphylococcus aureus (strain Mu3 / ATCC 700698).